We begin with the raw amino-acid sequence, 315 residues long: Fructose-1,6-bisphosphatase class 1 (315 aa).

Mg(2+) contacts are provided by glutamate 90, aspartate 111, leucine 113, and aspartate 114. Residues aspartate 114–serine 117, tyrosine 222, and lysine 253 contribute to the substrate site. Glutamate 259 is a Mg(2+) binding site.

This sequence belongs to the FBPase class 1 family. In terms of assembly, homotetramer. Mg(2+) serves as cofactor.

It localises to the cytoplasm. The enzyme catalyses beta-D-fructose 1,6-bisphosphate + H2O = beta-D-fructose 6-phosphate + phosphate. The protein operates within carbohydrate biosynthesis; gluconeogenesis. In Trichlorobacter lovleyi (strain ATCC BAA-1151 / DSM 17278 / SZ) (Geobacter lovleyi), this protein is Fructose-1,6-bisphosphatase class 1.